The primary structure comprises 202 residues: Protein EMBRYO DEFECTIVE 514 (202 aa).

2 disordered regions span residues 1–69 (MAEE…PVKL) and 168–202 (MKTP…RFRR). An N-acetylalanine modification is found at Ala2. 2 stretches are compositionally biased toward basic and acidic residues: residues 33–42 (ETGDEKRERE) and 51–65 (GESK…EKSG). The segment covering 174-202 (NGNGHGGGRGGGGGRRGGRGGGRGGRFRR) has biased composition (gly residues).

As to expression, expressed in leaves, flowers and embryos at globular stage.

The protein localises to the nucleus. Functionally, may play a role in ribosome biogenesis and in determining the rate of cell division. Involved in a process essential for nuclear and nucleolar functions. The chain is Protein EMBRYO DEFECTIVE 514 from Arabidopsis thaliana (Mouse-ear cress).